Reading from the N-terminus, the 289-residue chain is Nodulation protein NolT (289 aa).

Positions 1-33 (MFGSAHGDTTSSDTSGRRPLRLVVLPLLLALSS) are cleaved as a signal peptide. Cysteine 34 is lipidated: N-palmitoyl cysteine. Residue cysteine 34 is the site of S-diacylglycerol cysteine attachment. The helical transmembrane segment at 233–253 (VAVGVGAAVFAVTCYLLFIVL) threads the bilayer.

This sequence belongs to the YscJ lipoprotein family.

It is found in the cell outer membrane. In terms of biological role, regulates cultivar-specific nodulation of soybean. In Rhizobium fredii (Sinorhizobium fredii), this protein is Nodulation protein NolT (nolT).